Consider the following 421-residue polypeptide: Eukaryotic translation initiation factor 3 subunit E (421 aa).

The PCI domain maps to 215 to 394; it reads FFQNDTKGKD…STVILNHPSV (180 aa).

Belongs to the eIF-3 subunit E family. As to quaternary structure, component of the eukaryotic translation initiation factor 3 (eIF-3) complex.

Its subcellular location is the cytoplasm. Functionally, component of the eukaryotic translation initiation factor 3 (eIF-3) complex, which is involved in protein synthesis of a specialized repertoire of mRNAs and, together with other initiation factors, stimulates binding of mRNA and methionyl-tRNAi to the 40S ribosome. The eIF-3 complex specifically targets and initiates translation of a subset of mRNAs involved in cell proliferation. The polypeptide is Eukaryotic translation initiation factor 3 subunit E (Yarrowia lipolytica (strain CLIB 122 / E 150) (Yeast)).